We begin with the raw amino-acid sequence, 573 residues long: Plasmepsin X (573 aa).

The signal sequence occupies residues 1–26 (MKRISPLNTLFYLSLFFSYTFKGLKC). Residues 27 to 221 (TRIYKIGTKA…SSIEKNFIAL (195 aa)) constitute a propeptide that is removed on maturation. Intrachain disulfides connect C39–C51 and C42–C48. The tract at residues 167 to 211 (KGNKNFTNNENNSDNENNSDNENNSDNENNLDNENNLDNENNSDN) is disordered. The segment covering 183–203 (NNSDNENNSDNENNLDNENNL) has biased composition (acidic residues). A Peptidase A1 domain is found at 248–567 (FVGELLVGTP…ESRPSMVGVA (320 aa)). Residue D266 is part of the active site. A disulfide bridge links C279 with C284. N334 carries N-linked (GlcNAc...) asparagine glycosylation. Cysteines 447 and 448 form a disulfide. Residue D457 is part of the active site. A disulfide bridge links C482 with C521.

The protein belongs to the peptidase A1 family. Post-translationally, autocleaved into a p16 prodomain form and two mature forms p44 and p51.

The protein resides in the cytoplasmic vesicle. The protein localises to the secretory vesicle. Inhibited by aminohydantoin compounds such as CWHM-117. In terms of biological role, during the asexual blood stage, processes key proteins essential for merozoite egress and invasion of host erythrocytes. Cleaves and activates proteases SUB1 and SUB2. May process members of the EBL and Rh protein families. Also cleaves apical membrane protein AMA1. During the mosquito vector stage and probably in ookinetes, cleaves CelTOS. The protein is Plasmepsin X of Plasmodium falciparum (isolate NF54).